The primary structure comprises 119 residues: uncharacterized protein (119 aa).

A coiled-coil region spans residues 63–104; that stretch reads KKIKKELESNSEKRKAALQMIKEEHTAKVDRYKMIIEDLRQQ.

This is an uncharacterized protein from Bacillus subtilis (strain 168).